The primary structure comprises 747 residues: Elongation factor G, mitochondrial (747 aa).

A mitochondrion-targeting transit peptide spans 1 to 32 (MTLITRVLNGNLPLRLSTLKAARQLQCGYSSH). Residues 42-319 (ERIRNIGISA…AVVDYLPNPG (278 aa)) form the tr-type G domain. GTP-binding positions include 51–58 (AHIDSGKT), 118–122 (DTPGH), and 172–175 (NKLD).

Belongs to the TRAFAC class translation factor GTPase superfamily. Classic translation factor GTPase family. EF-G/EF-2 subfamily.

The protein resides in the mitochondrion. Its pathway is protein biosynthesis; polypeptide chain elongation. Mitochondrial GTPase that catalyzes the GTP-dependent ribosomal translocation step during translation elongation. During this step, the ribosome changes from the pre-translocational (PRE) to the post-translocational (POST) state as the newly formed A-site-bound peptidyl-tRNA and P-site-bound deacylated tRNA move to the P and E sites, respectively. Catalyzes the coordinated movement of the two tRNA molecules, the mRNA and conformational changes in the ribosome. Essential during development as it acts as a retrograde signal from mitochondria to the nucleus to slow down cell proliferation if mitochondrial energy output is low. This chain is Elongation factor G, mitochondrial, found in Drosophila mojavensis (Fruit fly).